The following is a 438-amino-acid chain: Serine hydroxymethyltransferase (438 aa).

Residues Leu-119 and 123–125 (GHL) each bind (6S)-5,6,7,8-tetrahydrofolate. Position 228 is an N6-(pyridoxal phosphate)lysine (Lys-228). 370-372 (SPF) lines the (6S)-5,6,7,8-tetrahydrofolate pocket.

Belongs to the SHMT family. In terms of assembly, homodimer. It depends on pyridoxal 5'-phosphate as a cofactor.

The protein resides in the cytoplasm. It carries out the reaction (6R)-5,10-methylene-5,6,7,8-tetrahydrofolate + glycine + H2O = (6S)-5,6,7,8-tetrahydrofolate + L-serine. It functions in the pathway one-carbon metabolism; tetrahydrofolate interconversion. Its pathway is amino-acid biosynthesis; glycine biosynthesis; glycine from L-serine: step 1/1. In terms of biological role, catalyzes the reversible interconversion of serine and glycine with tetrahydrofolate (THF) serving as the one-carbon carrier. This reaction serves as the major source of one-carbon groups required for the biosynthesis of purines, thymidylate, methionine, and other important biomolecules. Also exhibits THF-independent aldolase activity toward beta-hydroxyamino acids, producing glycine and aldehydes, via a retro-aldol mechanism. The protein is Serine hydroxymethyltransferase of Pelodictyon phaeoclathratiforme (strain DSM 5477 / BU-1).